We begin with the raw amino-acid sequence, 144 residues long: Cell division protein SepF (144 aa).

Over residues 14-31 the composition is skewed to acidic residues; the sequence is EDDEMNEVPYTESEEQQE. The tract at residues 14 to 41 is disordered; the sequence is EDDEMNEVPYTESEEQQEEIPQTQKNER.

The protein belongs to the SepF family. In terms of assembly, homodimer. Interacts with FtsZ.

Its subcellular location is the cytoplasm. In terms of biological role, cell division protein that is part of the divisome complex and is recruited early to the Z-ring. Probably stimulates Z-ring formation, perhaps through the cross-linking of FtsZ protofilaments. Its function overlaps with FtsA. The protein is Cell division protein SepF of Lactobacillus johnsonii (strain CNCM I-12250 / La1 / NCC 533).